The primary structure comprises 1357 residues: DNA-directed RNA polymerase subunit beta (1357 aa).

This sequence belongs to the RNA polymerase beta chain family. The RNAP catalytic core consists of 2 alpha, 1 beta, 1 beta' and 1 omega subunit. When a sigma factor is associated with the core the holoenzyme is formed, which can initiate transcription.

It carries out the reaction RNA(n) + a ribonucleoside 5'-triphosphate = RNA(n+1) + diphosphate. In terms of biological role, DNA-dependent RNA polymerase catalyzes the transcription of DNA into RNA using the four ribonucleoside triphosphates as substrates. The sequence is that of DNA-directed RNA polymerase subunit beta from Pseudomonas putida (strain W619).